The following is a 211-amino-acid chain: NADH-quinone oxidoreductase subunit A (211 aa).

Transmembrane regions (helical) follow at residues 7 to 27 (WSAL…LVVP), 61 to 81 (FYLV…LYAY), and 88 to 108 (VGWI…IGLI).

Belongs to the complex I subunit 3 family. NDH-1 is composed of 14 different subunits. Subunits NuoA, H, J, K, L, M, N constitute the membrane sector of the complex.

It localises to the cell inner membrane. The enzyme catalyses a quinone + NADH + 5 H(+)(in) = a quinol + NAD(+) + 4 H(+)(out). NDH-1 shuttles electrons from NADH, via FMN and iron-sulfur (Fe-S) centers, to quinones in the respiratory chain. The immediate electron acceptor for the enzyme in this species is believed to be ubiquinone. Couples the redox reaction to proton translocation (for every two electrons transferred, four hydrogen ions are translocated across the cytoplasmic membrane), and thus conserves the redox energy in a proton gradient. The polypeptide is NADH-quinone oxidoreductase subunit A (Psychrobacter sp. (strain PRwf-1)).